Consider the following 98-residue polypeptide: Aspartyl/glutamyl-tRNA(Asn/Gln) amidotransferase subunit C (98 aa).

The protein belongs to the GatC family. Heterotrimer of A, B and C subunits.

The catalysed reaction is L-glutamyl-tRNA(Gln) + L-glutamine + ATP + H2O = L-glutaminyl-tRNA(Gln) + L-glutamate + ADP + phosphate + H(+). It carries out the reaction L-aspartyl-tRNA(Asn) + L-glutamine + ATP + H2O = L-asparaginyl-tRNA(Asn) + L-glutamate + ADP + phosphate + 2 H(+). In terms of biological role, allows the formation of correctly charged Asn-tRNA(Asn) or Gln-tRNA(Gln) through the transamidation of misacylated Asp-tRNA(Asn) or Glu-tRNA(Gln) in organisms which lack either or both of asparaginyl-tRNA or glutaminyl-tRNA synthetases. The reaction takes place in the presence of glutamine and ATP through an activated phospho-Asp-tRNA(Asn) or phospho-Glu-tRNA(Gln). This is Aspartyl/glutamyl-tRNA(Asn/Gln) amidotransferase subunit C from Arthrobacter sp. (strain FB24).